The following is a 1969-amino-acid chain: Echinoderm microtubule-associated protein-like 5 (1969 aa).

WD repeat units lie at residues 59 to 100 (GHSD…TISV), 104 to 145 (VHTH…MLSM), 148 to 187 (GHTDRIFDISWDLYQPNKLVSCGVKHIKFWSLCGNALTPK), 195 to 233 (GDLQTILCLACARDELTYSGALNGDIYVWKGINLIRTIQ), 235 to 273 (AHAAGIFSMNACEEGFATGGRDGCIRLWDLTFKPITVID), 280 to 321 (GYKG…LIMQ), 323 to 362 (HCEGELWALAVHPTKPLAVTGSDDRSVRIWSLVDHALIAR), 406 to 445 (DRKEAIHELKYSPDGTYLAVGCNDSSVDIYGVAQRYKKVG), 449 to 488 (GSLSFITHLDWSSDSRYLQTNDGNGKRLFYRMPGGKEVTS), and 561 to 601 (GHSA…KLKD). The tract at residues 609–633 (ESLADSHSDESDSDLSDVPELDSEI) is disordered. Positions 619–633 (SDSDLSDVPELDSEI) are enriched in acidic residues. WD repeat units follow at residues 725 to 766 (GHDD…PLSI), 770 to 811 (HHQY…KLSI), 814 to 853 (GSKDKIFVVKMNPYVPDKLITAGIKHMKFWRKAGGGLIGR), 861 to 900 (GKNDTMMCAVYGWTEEMAFSGTSTGDVCIWRDIFLVKTVK), 901 to 940 (AHDGPVFSMHALEKGFVTGGKDGIVALWDDSFERCLKTYA), 996 to 1035 (HMEGEVWGLATHPYLPICATVSDDKTLRIWDLSPSHCMLA), 1038 to 1077 (KLKKGGRCCCFSPDGKALAVGLNDGSFLMANADTLEDLVS), 1080 to 1120 (HRKD…RVGI), and 1236 to 1276 (AHST…YREK). Disordered stretches follow at residues 1274-1297 (REKRPCDSEESDIDSEEDGGYDSD) and 1326-1355 (QQKEPSIDERPPVSRAPPQPEKLQTNNVGK). A compositionally biased stretch (acidic residues) spans 1281 to 1294 (SEESDIDSEEDGGY). Residues 1326-1337 (QQKEPSIDERPP) show a composition bias toward basic and acidic residues. WD repeat units lie at residues 1412–1463 (EHND…TLSI), 1467–1508 (YHSK…KIAS), 1511–1550 (GHNQRIFVAEFRPDSDTQFVSVGVKHVKFWTLAGRALLSK), 1560–1598 (ARMQTMLAIAFGANNLTFTGTISGDVCVWKDHILCRIVA), 1600–1646 (AHNG…RAFR), 1691–1731 (GHVD…MLNK), 1733–1774 (NLGH…GKKR), 1775–1814 (DRRCAIHDIRFSPDSRYLAVGSSENSVDFYDLTLGPTLNR), 1887–1926 (AEKADVNCACVSHSGISLVTGDDFGMVKLFDFPCPEKFAK), and 1932–1969 (GHSPHVTNIRFTSGDRHVVSAGGDDCSLFVWKCVHTPH).

It belongs to the WD repeat EMAP family.

The protein resides in the cytoplasm. The protein localises to the cytoskeleton. May modify the assembly dynamics of microtubules, such that microtubules are slightly longer, but more dynamic. This is Echinoderm microtubule-associated protein-like 5 (EML5) from Homo sapiens (Human).